Here is a 915-residue protein sequence, read N- to C-terminus: Probable dipeptidyl-aminopeptidase B (915 aa).

2 disordered regions span residues 1–20 and 52–74; these read MAGE…TRGS and QDSR…NEEE. Residues 1 to 95 lie on the Cytoplasmic side of the membrane; sequence MAGEKGGSRD…GGKTVQKTTK (95 aa). Residues 55–72 are compositionally biased toward basic and acidic residues; that stretch reads RLGEKDQRDDDHDQYRNE. A helical; Signal-anchor for type II membrane protein transmembrane segment spans residues 96 to 116; sequence IVLWALLFLCVGGWSLAFVIF. The Vacuolar portion of the chain corresponds to 117-915; the sequence is LFRGHDTPQT…RAETWGGLPV (799 aa). 4 N-linked (GlcNAc...) asparagine glycosylation sites follow: Asn-133, Asn-179, Asn-349, and Asn-572. Ser-754 acts as the Charge relay system in catalysis. An N-linked (GlcNAc...) asparagine glycan is attached at Asn-813. Active-site charge relay system residues include Asp-831 and His-864. An N-linked (GlcNAc...) asparagine glycan is attached at Asn-900.

It belongs to the peptidase S9B family.

The protein localises to the vacuole membrane. The enzyme catalyses Release of an N-terminal dipeptide, Xaa-Yaa-|-Zaa-, from a polypeptide, preferentially when Yaa is Pro, provided Zaa is neither Pro nor hydroxyproline.. Its function is as follows. Type IV dipeptidyl-peptidase which removes N-terminal dipeptides sequentially from polypeptides having unsubstituted N-termini provided that the penultimate residue is proline. This Blastomyces gilchristii (strain SLH14081) (Blastomyces dermatitidis) protein is Probable dipeptidyl-aminopeptidase B (DAPB).